We begin with the raw amino-acid sequence, 332 residues long: tRNA dimethylallyltransferase 2 (332 aa).

ATP is bound at residue 15 to 22 (GPTASGKT). 17–22 (TASGKT) lines the substrate pocket. 2 interaction with substrate tRNA regions span residues 40–43 (DSVM) and 164–168 (QRIQR).

This sequence belongs to the IPP transferase family. In terms of assembly, monomer. It depends on Mg(2+) as a cofactor.

The enzyme catalyses adenosine(37) in tRNA + dimethylallyl diphosphate = N(6)-dimethylallyladenosine(37) in tRNA + diphosphate. Its function is as follows. Catalyzes the transfer of a dimethylallyl group onto the adenine at position 37 in tRNAs that read codons beginning with uridine, leading to the formation of N6-(dimethylallyl)adenosine (i(6)A). The protein is tRNA dimethylallyltransferase 2 of Hahella chejuensis (strain KCTC 2396).